A 273-amino-acid polypeptide reads, in one-letter code: Nitrogenase iron protein (273 aa).

8 to 15 lines the ATP pocket; that stretch reads GKGGIGKS. A [4Fe-4S] cluster-binding site is contributed by Cys94. Arg97 is subject to ADP-ribosylarginine; by dinitrogenase reductase ADP-ribosyltransferase. Residue Cys130 coordinates [4Fe-4S] cluster.

This sequence belongs to the NifH/BchL/ChlL family. As to quaternary structure, homodimer. The cofactor is [4Fe-4S] cluster. The reversible ADP-ribosylation of Arg-97 inactivates the nitrogenase reductase and regulates nitrogenase activity.

It catalyses the reaction N2 + 8 reduced [2Fe-2S]-[ferredoxin] + 16 ATP + 16 H2O = H2 + 8 oxidized [2Fe-2S]-[ferredoxin] + 2 NH4(+) + 16 ADP + 16 phosphate + 6 H(+). In terms of biological role, the key enzymatic reactions in nitrogen fixation are catalyzed by the nitrogenase complex, which has 2 components: the iron protein and the molybdenum-iron protein. In Desulforapulum autotrophicum (strain ATCC 43914 / DSM 3382 / VKM B-1955 / HRM2) (Desulfobacterium autotrophicum), this protein is Nitrogenase iron protein.